We begin with the raw amino-acid sequence, 181 residues long: Adenine phosphoribosyltransferase (181 aa).

The protein belongs to the purine/pyrimidine phosphoribosyltransferase family. As to quaternary structure, homodimer.

Its subcellular location is the cytoplasm. The enzyme catalyses AMP + diphosphate = 5-phospho-alpha-D-ribose 1-diphosphate + adenine. Its pathway is purine metabolism; AMP biosynthesis via salvage pathway; AMP from adenine: step 1/1. Catalyzes a salvage reaction resulting in the formation of AMP, that is energically less costly than de novo synthesis. The protein is Adenine phosphoribosyltransferase of Rhodopseudomonas palustris (strain ATCC BAA-98 / CGA009).